Here is a 418-residue protein sequence, read N- to C-terminus: DnaJ protein homolog 2 (418 aa).

A J domain is found at 11-76; the sequence is NTKYYEVLGV…REIYDQYGEE (66 aa). The CR-type zinc-finger motif lies at 135–219; it reads GTSKKLSLSR…CKGEKVVQQK (85 aa). CXXCXGXG motif repeat units follow at residues 148-155, 164-171, 191-198, and 207-214; these read CTKCKGKG, CASCQGSG, CNECKGTG, and CPQCKGEK. The segment at 382 to 418 is disordered; it reads VNIEEEMRRKQHQQAQEAYDEDDEGHGGAQRVQCAQQ. Residue C415 is modified to Cysteine methyl ester. The S-farnesyl cysteine moiety is linked to residue C415. Residues 416–418 constitute a propeptide, removed in mature form; sequence AQQ.

The protein resides in the membrane. Functionally, plays a continuous role in plant development probably in the structural organization of compartments. The sequence is that of DnaJ protein homolog 2 (LDJ2) from Allium porrum (Leek).